Reading from the N-terminus, the 778-residue chain is Probable dipeptidyl peptidase 4 (778 aa).

An N-terminal signal peptide occupies residues 1 to 18 (MKTSQFLSLLLLAGIAQA). N-linked (GlcNAc...) asparagine glycans are attached at residues asparagine 84, asparagine 114, and asparagine 222. Residues serine 616, aspartate 693, and histidine 728 each act as charge relay system in the active site.

This sequence belongs to the peptidase S9B family.

The protein resides in the secreted. It catalyses the reaction Release of an N-terminal dipeptide, Xaa-Yaa-|-Zaa-, from a polypeptide, preferentially when Yaa is Pro, provided Zaa is neither Pro nor hydroxyproline.. Extracellular dipeptidyl-peptidase which removes N-terminal dipeptides sequentially from polypeptides having unsubstituted N-termini provided that the penultimate residue is proline. Contributes to pathogenicity. This Arthroderma benhamiae (strain ATCC MYA-4681 / CBS 112371) (Trichophyton mentagrophytes) protein is Probable dipeptidyl peptidase 4 (DPP4).